The chain runs to 306 residues: Mitochondrial glycine transporter (306 aa).

Solcar repeat units lie at residues 25 to 114 (QPVI…LKQY), 121 to 205 (PTAL…TKNV), and 217 to 301 (LVPV…MMAK). 6 helical membrane passes run 31–56 (FLCGSISGTCSTVLFQPLDLLKTRLQ), 89–115 (GMSPSIVRCVPGVGIYFGTLYSLKQYF), 127–152 (VILGAGSRSVAGVCMSPITVIKTRYE), 180–203 (GLTATLLRDAPFSGIYLMFYSQTK), 221–247 (VNFSCGIFAGILASLVTQPADVIKTHM), and 276–294 (GSVPRALRRTLVAAMAWTV).

Belongs to the mitochondrial carrier (TC 2.A.29) family. SLC25A38 subfamily.

The protein resides in the mitochondrion inner membrane. The enzyme catalyses glycine(in) = glycine(out). Its function is as follows. Mitochondrial glycine transporter that imports glycine into the mitochondrial matrix. Plays an important role in providing glycine for the first enzymatic step in heme biosynthesis, the condensation of glycine with succinyl-CoA to produce 5-aminolevulinate (ALA) in the mitochondrial matrix. Required during erythropoiesis. Functionally, plays a role as pro-apoptotic protein that induces caspase-dependent apoptosis. The chain is Mitochondrial glycine transporter from Ovis aries (Sheep).